A 212-amino-acid chain; its full sequence is Golgi-associated RAB2 interactor protein 5A (212 aa).

2 disordered regions span residues 1-21 (MKGG…LAPA) and 162-212 (PFTH…LWGL). Residues 169–185 (APEEEEEEEEEEEEEEV) show a composition bias toward acidic residues.

The protein belongs to the GARIN family. As to quaternary structure, interacts (via N-terminus) with RAB2B (in GTP-bound form). In terms of tissue distribution, expressed in testis (at protein level).

It localises to the golgi apparatus. In terms of biological role, RAB2B effector protein which promotes cytosolic DNA-induced innate immune responses. Regulates IFN responses against DNA viruses by regulating the CGAS-STING signaling axis. This Mus musculus (Mouse) protein is Golgi-associated RAB2 interactor protein 5A.